A 715-amino-acid polypeptide reads, in one-letter code: Glycine--tRNA ligase beta subunit (715 aa).

Belongs to the class-II aminoacyl-tRNA synthetase family. Tetramer of two alpha and two beta subunits.

It is found in the cytoplasm. The catalysed reaction is tRNA(Gly) + glycine + ATP = glycyl-tRNA(Gly) + AMP + diphosphate. The polypeptide is Glycine--tRNA ligase beta subunit (Nitrosomonas europaea (strain ATCC 19718 / CIP 103999 / KCTC 2705 / NBRC 14298)).